We begin with the raw amino-acid sequence, 331 residues long: tRNA U34 carboxymethyltransferase (331 aa).

Carboxy-S-adenosyl-L-methionine-binding positions include Lys91, Trp105, Lys110, Gly130, 152 to 154 (DPS), 181 to 182 (IE), Met196, Tyr200, and Arg315.

This sequence belongs to the class I-like SAM-binding methyltransferase superfamily. CmoB family. In terms of assembly, homotetramer.

The catalysed reaction is carboxy-S-adenosyl-L-methionine + 5-hydroxyuridine(34) in tRNA = 5-carboxymethoxyuridine(34) in tRNA + S-adenosyl-L-homocysteine + H(+). Catalyzes carboxymethyl transfer from carboxy-S-adenosyl-L-methionine (Cx-SAM) to 5-hydroxyuridine (ho5U) to form 5-carboxymethoxyuridine (cmo5U) at position 34 in tRNAs. The sequence is that of tRNA U34 carboxymethyltransferase from Shewanella baltica (strain OS185).